Here is an 87-residue protein sequence, read N- to C-terminus: DNA-directed RNA polymerase subunit omega (87 aa).

The protein belongs to the RNA polymerase subunit omega family. In terms of assembly, the RNAP catalytic core consists of 2 alpha, 1 beta, 1 beta' and 1 omega subunit. When a sigma factor is associated with the core the holoenzyme is formed, which can initiate transcription.

It catalyses the reaction RNA(n) + a ribonucleoside 5'-triphosphate = RNA(n+1) + diphosphate. Functionally, promotes RNA polymerase assembly. Latches the N- and C-terminal regions of the beta' subunit thereby facilitating its interaction with the beta and alpha subunits. In Pseudomonas fluorescens (strain SBW25), this protein is DNA-directed RNA polymerase subunit omega.